The chain runs to 230 residues: Large ribosomal subunit protein uL3 (230 aa).

2 disordered regions span residues Gln-125–Asp-149 and Pro-210–Glu-230.

This sequence belongs to the universal ribosomal protein uL3 family. Part of the 50S ribosomal subunit. Forms a cluster with proteins L14 and L19.

Its function is as follows. One of the primary rRNA binding proteins, it binds directly near the 3'-end of the 23S rRNA, where it nucleates assembly of the 50S subunit. The protein is Large ribosomal subunit protein uL3 of Mesomycoplasma hyopneumoniae (strain 232) (Mycoplasma hyopneumoniae).